We begin with the raw amino-acid sequence, 138 residues long: Ribosome-binding factor A (138 aa).

The protein belongs to the RbfA family. In terms of assembly, monomer. Binds 30S ribosomal subunits, but not 50S ribosomal subunits or 70S ribosomes.

It is found in the cytoplasm. Its function is as follows. One of several proteins that assist in the late maturation steps of the functional core of the 30S ribosomal subunit. Associates with free 30S ribosomal subunits (but not with 30S subunits that are part of 70S ribosomes or polysomes). Required for efficient processing of 16S rRNA. May interact with the 5'-terminal helix region of 16S rRNA. In Pseudoalteromonas atlantica (strain T6c / ATCC BAA-1087), this protein is Ribosome-binding factor A.